Here is a 295-residue protein sequence, read N- to C-terminus: Tyrosine recombinase XerD (295 aa).

Residues 1–85 (MNTIIEEYLN…TIRSFHQFAL (85 aa)) enclose the Core-binding (CB) domain. The Tyr recombinase domain occupies 106 to 289 (KLPDVLEIDE…SKSQIRKMYT (184 aa)). Catalysis depends on residues R146, K170, H241, R244, and H267. Catalysis depends on Y276, which acts as the O-(3'-phospho-DNA)-tyrosine intermediate.

It belongs to the 'phage' integrase family. XerD subfamily. As to quaternary structure, forms a cyclic heterotetrameric complex composed of two molecules of XerC and two molecules of XerD.

The protein resides in the cytoplasm. Its function is as follows. Site-specific tyrosine recombinase, which acts by catalyzing the cutting and rejoining of the recombining DNA molecules. The XerC-XerD complex is essential to convert dimers of the bacterial chromosome into monomers to permit their segregation at cell division. It also contributes to the segregational stability of plasmids. The polypeptide is Tyrosine recombinase XerD (Staphylococcus epidermidis (strain ATCC 12228 / FDA PCI 1200)).